The chain runs to 76 residues: Exodeoxyribonuclease 7 small subunit (76 aa).

This sequence belongs to the XseB family. As to quaternary structure, heterooligomer composed of large and small subunits.

It localises to the cytoplasm. It catalyses the reaction Exonucleolytic cleavage in either 5'- to 3'- or 3'- to 5'-direction to yield nucleoside 5'-phosphates.. Its function is as follows. Bidirectionally degrades single-stranded DNA into large acid-insoluble oligonucleotides, which are then degraded further into small acid-soluble oligonucleotides. The polypeptide is Exodeoxyribonuclease 7 small subunit (Legionella pneumophila subsp. pneumophila (strain Philadelphia 1 / ATCC 33152 / DSM 7513)).